The following is a 294-amino-acid chain: 33 kDa chaperonin (294 aa).

2 disulfides stabilise this stretch: Cys235/Cys237 and Cys268/Cys271.

Belongs to the HSP33 family. Post-translationally, under oxidizing conditions two disulfide bonds are formed involving the reactive cysteines. Under reducing conditions zinc is bound to the reactive cysteines and the protein is inactive.

The protein localises to the cytoplasm. Redox regulated molecular chaperone. Protects both thermally unfolding and oxidatively damaged proteins from irreversible aggregation. Plays an important role in the bacterial defense system toward oxidative stress. This is 33 kDa chaperonin from Proteus mirabilis (strain HI4320).